A 542-amino-acid polypeptide reads, in one-letter code: GPI alpha-1,2-mannosyltransferase 3 (542 aa).

The disordered stretch occupies residues 1-36 (MESQAADYNPASRNLHGSSGEMKLRRRKSRQYVSAQ). Helical transmembrane passes span 52–72 (LVLFTIALRILNCFLVQTSFV), 125–145 (VQFLIWIPRLGQALLSAVADI), 213–233 (LVALACVVRPTALIPWVPLLF), 244–264 (HLTLHHFLPVGFITFSLSLII), 304–324 (GFPVVLGTHLPFFIHGCFLAP), 327–347 (LHILLLTVLWTLLVYSMLGHK), 351–371 (FIYPVLPFCMVFCGYSLAHLK), and 376–396 (AALSFLLLSNVPLAFYTGLVH). A glycan (N-linked (GlcNAc...) asparagine) is linked at asparagine 480.

Belongs to the glycosyltransferase 22 family. PIGB subfamily.

The protein localises to the endoplasmic reticulum membrane. Its pathway is glycolipid biosynthesis; glycosylphosphatidylinositol-anchor biosynthesis. In terms of biological role, alpha-1,2-mannosyltransferase that catalyzes the transfer of the third mannose, via an alpha-1,2 bond, from a dolichol-phosphate-mannose (Dol-P-Man) to an alpha-D-Man-(1-&gt;6)-2-PEtn-alpha-D-Man-(1-&gt;4)-alpha-D-GlcN-(1-&gt;6)-(1-radyl,2-acyl-sn-glycero-3-phospho)-2-acyl-inositol intermediate to generate an alpha-D-Man-(1-&gt;2)-alpha-D-Man-(1-&gt;6)-2-PEtn-alpha-D-Man-(1-&gt;4)-alpha-D-GlcN-(1-&gt;6)-(1-radyl,2-acyl-sn-glycero-3-phospho)-2-acyl-inositol (also termed H6) and participates in the nineth step of the glycosylphosphatidylinositol-anchor biosynthesis. May also add the third mannose to an alpha-D-Man-(1-&gt;6)-alpha-D-Man-(1-&gt;4)-alpha-D-GlcN-(1-&gt;6)-(1-radyl,2-acyl-sn-glycero-3-phospho)-2-acyl-inositol (also termed H3) intermediate generating an alpha-D-Man-(1-&gt;2)-alpha-D-Man-(1-&gt;6)-alpha-D-Man-(1-&gt;4)-alpha-D-GlcN-(1-&gt;6)-(1-radyl,2-acyl-sn-glycero-3-phospho)-2-acyl-inositol (also termed H4). The protein is GPI alpha-1,2-mannosyltransferase 3 of Mus musculus (Mouse).